A 2258-amino-acid chain; its full sequence is Probable serine/threonine-protein kinase ifkA (2258 aa).

Disordered regions lie at residues 43–108 (RVNS…HQMG) and 189–308 (EMNN…KEND). The span at 45–57 (NSSDDINNNNNNN) shows a compositional bias: low complexity. The segment covering 58-100 (NDDDDDNDDYDDSDDENSDSDYDDYDDSDDENSDDEFYSDDED) has biased composition (acidic residues). Residues 191 to 301 (NNLTNSNNSN…NKELIDNNNN (111 aa)) are compositionally biased toward low complexity. Residues 273-309 (NNNNNISNNKINKINNNNNNKELIDNNNNNKDKENDL) are a coiled coil. The Protein kinase 1 domain maps to 319–691 (WKKGSCIERK…AGILLKHPFL (373 aa)). ATP-binding positions include 325 to 333 (IERKSNYSV) and lysine 348. Residues 358 to 398 (SSSSLTSLSNSNNNNSNNNNNNNNNNNNNNNNNNNNNNNNN) are disordered. The segment covering 359–398 (SSSLTSLSNSNNNNSNNNNNNNNNNNNNNNNNNNNNNNNN) has biased composition (low complexity). The active-site Proton acceptor is aspartate 498. Disordered stretches follow at residues 741–768 (KSQT…NGSN) and 782–870 (PLAT…MTPL). Residues 746–768 (NNNNDNNNLASSNELLSSSNGSN) are compositionally biased toward low complexity. Residues 782–791 (PLATSSSLDN) are compositionally biased toward polar residues. A compositionally biased stretch (pro residues) spans 793–805 (TPPPSRPISPKPS). The span at 841-870 (PQQNFNTPPTTTTTTTTPTATPTTPTMTPL) shows a compositional bias: low complexity. Positions 894 to 1482 (FEEIEMIGKG…TKQLLESGLL (589 aa)) constitute a Protein kinase 2 domain. ATP-binding positions include 900–908 (IGKGGFGVV) and lysine 923. Low complexity predominate over residues 1053-1094 (TLSSSNTSSSSSLLSNNKSKILNTSKSTSTNTSTSTSTSNTN). The disordered stretch occupies residues 1053–1259 (TLSSSNTSSS…SSSRKKPPKE (207 aa)). Positions 1095 to 1106 (KNKKISKKKKSK) are enriched in basic residues. The span at 1156-1185 (NNNNNNDNNNNYHSDNESDSFSGSISMSDG) shows a compositional bias: low complexity. A compositionally biased stretch (acidic residues) spans 1206–1233 (DENENDDDDEEDDDDEYDEEDDDYETFD). A compositionally biased stretch (low complexity) spans 1242 to 1251 (SNNSKLSTSS). Residue aspartate 1313 is the Proton acceptor of the active site. 2 disordered regions span residues 1343-1370 (KSDD…TAQQ) and 2048-2104 (GSGG…QQTS). Low complexity predominate over residues 1347–1368 (LNSSTSNTANNINLSSSTNSTA). Positions 2048-2072 (GSGGSGGSGGGSSMSSGGGGGGNSN) are enriched in gly residues. Low complexity predominate over residues 2085–2099 (SNQSTSSSGNSNNSN).

This sequence belongs to the protein kinase superfamily. Ser/Thr protein kinase family.

The enzyme catalyses L-seryl-[protein] + ATP = O-phospho-L-seryl-[protein] + ADP + H(+). It carries out the reaction L-threonyl-[protein] + ATP = O-phospho-L-threonyl-[protein] + ADP + H(+). Its function is as follows. Phosphorylates eIF2-alpha, from 1 to 7 hours after the onset of development or during the preaggregation state, resulting in a shift from polysomes to free ribosomes for bulk mRNA. In Dictyostelium discoideum (Social amoeba), this protein is Probable serine/threonine-protein kinase ifkA (ifkA).